A 261-amino-acid polypeptide reads, in one-letter code: Kallikrein 1-related peptidase b8 (261 aa).

An N-terminal signal peptide occupies residues Met-1–Ala-18. Positions Pro-19–Arg-24 are cleaved as a propeptide — activation peptide. One can recognise a Peptidase S1 domain in the interval Val-25 to Thr-258. Cystine bridges form between Cys-31–Cys-173, Cys-50–Cys-66, Cys-152–Cys-219, Cys-184–Cys-198, and Cys-209–Cys-234. His-65 functions as the Charge relay system in the catalytic mechanism. Asn-102 is a glycosylation site (N-linked (GlcNAc...) asparagine). Asp-120 functions as the Charge relay system in the catalytic mechanism. The Charge relay system role is filled by Ser-213.

Belongs to the peptidase S1 family. Kallikrein subfamily.

The catalysed reaction is Preferential cleavage of Arg-|-Xaa bonds in small molecule substrates. Highly selective action to release kallidin (lysyl-bradykinin) from kininogen involves hydrolysis of Met-|-Xaa or Leu-|-Xaa.. Its function is as follows. Glandular kallikreins cleave Met-Lys and Arg-Ser bonds in kininogen to release Lys-bradykinin. The sequence is that of Kallikrein 1-related peptidase b8 (Klk1b8) from Mus musculus (Mouse).